The chain runs to 344 residues: tRNA N6-adenosine threonylcarbamoyltransferase (344 aa).

Residues H111 and H115 each coordinate Fe cation. Residues 133–137, D166, G179, and N283 each bind substrate; that span reads LVSGG. D311 provides a ligand contact to Fe cation.

It belongs to the KAE1 / TsaD family. Fe(2+) is required as a cofactor.

The protein resides in the cytoplasm. The catalysed reaction is L-threonylcarbamoyladenylate + adenosine(37) in tRNA = N(6)-L-threonylcarbamoyladenosine(37) in tRNA + AMP + H(+). Its function is as follows. Required for the formation of a threonylcarbamoyl group on adenosine at position 37 (t(6)A37) in tRNAs that read codons beginning with adenine. Is involved in the transfer of the threonylcarbamoyl moiety of threonylcarbamoyl-AMP (TC-AMP) to the N6 group of A37, together with TsaE and TsaB. TsaD likely plays a direct catalytic role in this reaction. This chain is tRNA N6-adenosine threonylcarbamoyltransferase, found in Orientia tsutsugamushi (strain Boryong) (Rickettsia tsutsugamushi).